The following is a 252-amino-acid chain: MSDNNIKIIIAPAKKMRVDQDTFLVKSEPAFLDKTQELLDFLKTRSFNQLQDLWKANDNIVRTNQHNLVTSELDSNLTPALLAFSGIQYQYLAGDVLPQEGLDYLQDHLRILSGFYGILRPFDGIIPYRLELKTQMTGFKYYSLYNFWKDLPYQELFADTDTVINLASLEYSRLISPYLKDSQKMITIKFLENKNGKWRQSATHAKMARGEMVRFAAKEGINRPEDLKEFSDFGYVFSAADSTKENYIFKKL.

This sequence belongs to the UPF0246 family.

This Lactobacillus johnsonii (strain CNCM I-12250 / La1 / NCC 533) protein is UPF0246 protein LJ_0535.